Here is a 407-residue protein sequence, read N- to C-terminus: snRNA-activating protein complex subunit 3 (407 aa).

The span at 1–12 shows a compositional bias: gly residues; the sequence is MAEDPQGGGAGG. Residues 1–26 are disordered; the sequence is MAEDPQGGGAGGPQHPVPSGSHSSFP.

Belongs to the SNAPC3/SRD2 family. As to quaternary structure, part of the SNAPc complex composed of 5 subunits: SNAPC1, SNAPC2, SNAPC3, SNAPC4 and SNAPC5. SNAPC3 interacts with SNAPC1.

The protein resides in the nucleus. In terms of biological role, part of the SNAPc complex required for the transcription of both RNA polymerase II and III small-nuclear RNA genes. Binds to the proximal sequence element (PSE), a non-TATA-box basal promoter element common to these 2 types of genes. Recruits TBP and BRF2 to the U6 snRNA TATA box. The chain is snRNA-activating protein complex subunit 3 (Snapc3) from Rattus norvegicus (Rat).